We begin with the raw amino-acid sequence, 282 residues long: Probable protein phosphatase 2C 45 (282 aa).

Positions 27–272 (SYGYASSPGK…DNITCVVVRF (246 aa)) constitute a PPM-type phosphatase domain. 4 residues coordinate Mn(2+): D63, G64, D224, and D263.

It belongs to the PP2C family. Requires Mg(2+) as cofactor. Mn(2+) serves as cofactor.

The catalysed reaction is O-phospho-L-seryl-[protein] + H2O = L-seryl-[protein] + phosphate. It catalyses the reaction O-phospho-L-threonyl-[protein] + H2O = L-threonyl-[protein] + phosphate. This is Probable protein phosphatase 2C 45 from Oryza sativa subsp. japonica (Rice).